A 396-amino-acid polypeptide reads, in one-letter code: S-adenosylmethionine synthase 4 (396 aa).

A Mg(2+)-binding site is contributed by E12. ATP is bound at residue H18. Residue E46 participates in K(+) binding. Positions 59 and 102 each coordinate L-methionine. ATP-binding positions include 170–172, 238–241, D249, 255–256, A272, K276, and K280; these read DGK, SGRF, and RK. D249 lines the L-methionine pocket. K280 contributes to the L-methionine binding site.

This sequence belongs to the AdoMet synthase family. In terms of assembly, homotetramer. It depends on Mn(2+) as a cofactor. The cofactor is Mg(2+). Co(2+) is required as a cofactor. K(+) serves as cofactor.

Its subcellular location is the cytoplasm. It catalyses the reaction L-methionine + ATP + H2O = S-adenosyl-L-methionine + phosphate + diphosphate. It functions in the pathway amino-acid biosynthesis; S-adenosyl-L-methionine biosynthesis; S-adenosyl-L-methionine from L-methionine: step 1/1. Its function is as follows. Catalyzes the formation of S-adenosylmethionine from methionine and ATP. The reaction comprises two steps that are both catalyzed by the same enzyme: formation of S-adenosylmethionine (AdoMet) and triphosphate, and subsequent hydrolysis of the triphosphate. This is S-adenosylmethionine synthase 4 (SAM4) from Hordeum vulgare (Barley).